The chain runs to 86 residues: Putative membrane protein insertion efficiency factor (86 aa).

The protein belongs to the UPF0161 family.

Its subcellular location is the cell inner membrane. Its function is as follows. Could be involved in insertion of integral membrane proteins into the membrane. The chain is Putative membrane protein insertion efficiency factor from Histophilus somni (strain 129Pt) (Haemophilus somnus).